Consider the following 105-residue polypeptide: Small ribosomal subunit protein eS10A (105 aa).

This sequence belongs to the eukaryotic ribosomal protein eS10 family. As to quaternary structure, component of the small ribosomal subunit (SSU). Mature yeast ribosomes consist of a small (40S) and a large (60S) subunit. The 40S small subunit contains 1 molecule of ribosomal RNA (18S rRNA) and 33 different proteins (encoded by 57 genes). The large 60S subunit contains 3 rRNA molecules (25S, 5.8S and 5S rRNA) and 46 different proteins (encoded by 81 genes). eS10 interacts with GCN1 (via middle region); this interaction is direct and promotes GCN2 kinase activity. The N-terminus is not modified.

The protein localises to the cytoplasm. Its function is as follows. Component of the ribosome, a large ribonucleoprotein complex responsible for the synthesis of proteins in the cell. The small ribosomal subunit (SSU) binds messenger RNAs (mRNAs) and translates the encoded message by selecting cognate aminoacyl-transfer RNA (tRNA) molecules. The large subunit (LSU) contains the ribosomal catalytic site termed the peptidyl transferase center (PTC), which catalyzes the formation of peptide bonds, thereby polymerizing the amino acids delivered by tRNAs into a polypeptide chain. The nascent polypeptides leave the ribosome through a tunnel in the LSU and interact with protein factors that function in enzymatic processing, targeting, and the membrane insertion of nascent chains at the exit of the ribosomal tunnel. eS10 plays a role as a positive regulator of the GCN2 kinase activity by stimulating GCN1-mediated GCN2 activation. The sequence is that of Small ribosomal subunit protein eS10A from Saccharomyces cerevisiae (strain ATCC 204508 / S288c) (Baker's yeast).